A 298-amino-acid polypeptide reads, in one-letter code: Fe(II)/2-oxoglutarate-dependent dioxygenase nvfF (298 aa).

The Fe cation site is built by His137, Asp139, and His212.

Belongs to the PhyH family. In terms of assembly, homodimer. Fe cation is required as a cofactor.

It carries out the reaction fumigatonoid C + 2-oxoglutarate + O2 = novofumigatonin + succinate + CO2 + H2O. The protein operates within secondary metabolite biosynthesis; terpenoid biosynthesis. Its function is as follows. Fe(II)/2-oxoglutarate-dependent dioxygenase; part of the gene cluster that mediates the biosynthesis of novofumigatonin, a heavily oxygenated meroterpenoid containing a unique orthoester moiety. The first step of the pathway is the synthesis of 3,5-dimethylorsellinic acid (DMOA) by the polyketide synthase nvfA via condensation of one acetyl-CoA starter unit with 3 malonyl-CoA units and 2 methylations. DMOA is then converted to farnesyl-DMOA by the farnesyltransferase nvfB. Epoxydation by FAD-dependent monooxygenase nvfK, followed by a protonation-initiated cyclization catalyzed by the terpene cyclase nvfL leads to the production of asnavolin H. The short chain dehydrogenase nvfC then as a 3-OH dehydrogenase of asnovolin H to yield chemesin D. There are two branches to synthesize asnovolin A from chemesin D. In one branch, chemesin D undergoes Baeyer-Villiger oxidation by nvfH, methylation by nvfJ, and enoyl reduction by the nvfM D enoylreductase that reduces the double bond between C-5'and C-6', to form respectively asnovolin I, asnovolin K, and asnovolin A. In the other branch, the methylation precedes the Baeyer-Villiger oxidation and the enoyl reduction to yield asnovolin A via the asnovolin J intermediate. Asnovolin A is further converted to fumigatonoid A by the Fe(II)/2-oxoglutarate-dependent dioxygenase nvfI that catalyzes an endoperoxidation reaction. The alpha/beta hydrolase nvfD then acts as an epimerase that converts fumigatonoid A to its C-5' epimer, which then undergoes spontaneous or nvfD-catalyzed lactonization. The following step utilizes the ketoreductase nvfG to produce fumigatonoid B. The dioxygenase nvfE further converts fumigatonoid B into fumigatonoid C. Finally the Fe(II)/2-oxoglutarate-dependent dioxygenase nvfF catalyzes two rounds of oxidation to transform fumigatonoid C into the end product, novofumigatonin A. The protein is Fe(II)/2-oxoglutarate-dependent dioxygenase nvfF of Aspergillus novofumigatus (strain IBT 16806).